The sequence spans 164 residues: Cyanate hydratase (164 aa).

Active-site residues include R104, E107, and S130.

The protein belongs to the cyanase family.

It carries out the reaction cyanate + hydrogencarbonate + 3 H(+) = NH4(+) + 2 CO2. Catalyzes the reaction of cyanate with bicarbonate to produce ammonia and carbon dioxide. The sequence is that of Cyanate hydratase from Botryotinia fuckeliana (strain B05.10) (Noble rot fungus).